We begin with the raw amino-acid sequence, 196 residues long: Putative NADH dehydrogenase/NAD(P)H nitroreductase XCV0587 (196 aa).

This sequence belongs to the nitroreductase family. HadB/RutE subfamily. FMN is required as a cofactor.

This Xanthomonas euvesicatoria pv. vesicatoria (strain 85-10) (Xanthomonas campestris pv. vesicatoria) protein is Putative NADH dehydrogenase/NAD(P)H nitroreductase XCV0587.